The following is an 845-amino-acid chain: Lon protease (845 aa).

The Lon N-terminal domain maps to 45–242 (MPILALRNMI…RLLYLLHKEL (198 aa)). ATP is bound at residue 393–400 (GPPGVGKT). Residues 629 to 811 (NGDAGVVIGL…NEVLKEALLE (183 aa)) enclose the Lon proteolytic domain. Residues serine 717 and lysine 760 contribute to the active site.

The protein belongs to the peptidase S16 family. In terms of assembly, homohexamer. Organized in a ring with a central cavity.

The protein resides in the cytoplasm. The enzyme catalyses Hydrolysis of proteins in presence of ATP.. Functionally, ATP-dependent serine protease that mediates the selective degradation of mutant and abnormal proteins as well as certain short-lived regulatory proteins. Required for cellular homeostasis and for survival from DNA damage and developmental changes induced by stress. Degrades polypeptides processively to yield small peptide fragments that are 5 to 10 amino acids long. Binds to DNA in a double-stranded, site-specific manner. The polypeptide is Lon protease (Porphyromonas gingivalis (strain ATCC 33277 / DSM 20709 / CIP 103683 / JCM 12257 / NCTC 11834 / 2561)).